A 602-amino-acid polypeptide reads, in one-letter code: Alpha-(1-&gt;6)-mannopyranosyltransferase B (602 aa).

Helical transmembrane passes span I105 to V125, M148 to V168, T190 to Y210, V244 to A264, I274 to W294, L320 to V340, G368 to V388, V404 to V424, W448 to L468, T472 to V492, I503 to V523, L546 to L566, and V571 to W591.

The protein belongs to the MptA/B family.

It is found in the membrane. Its pathway is cell wall biogenesis; cell wall polysaccharide biosynthesis. Functionally, involved in the initiation of core alpha-(1-&gt;6) mannan biosynthesis of lipomannan (LM-A) and multi-mannosylated polymer (LM-B), extending triacylatedphosphatidyl-myo-inositol dimannoside (Ac1PIM2) and mannosylated glycolipid, 1,2-di-O-C16/C18:1-(alpha-D-mannopyranosyl)-(1-&gt;4)-(alpha-D-glucopyranosyluronic acid)-(1-&gt;3)-glycerol (Man1GlcAGroAc2), respectively. Catalyzes the addition of alpha-(1-&gt;6)-mannose residue. This chain is Alpha-(1-&gt;6)-mannopyranosyltransferase B (mptB), found in Corynebacterium glutamicum (strain ATCC 13032 / DSM 20300 / JCM 1318 / BCRC 11384 / CCUG 27702 / LMG 3730 / NBRC 12168 / NCIMB 10025 / NRRL B-2784 / 534).